The sequence spans 173 residues: Alpha-crystallin A chain (173 aa).

Met1 carries the N-acetylmethionine modification. Residues 1 to 63 (MDVTIQHPWF…RTVLDSGISE (63 aa)) are required for complex formation with BFSP1 and BFSP2. A Deamidated glutamine; partial modification is found at Gln6. Ser45 is modified (phosphoserine). Gln50 is subject to Deamidated glutamine; partial. The region spanning 52–162 (LFRTVLDSGI…GHSERAIPVS (111 aa)) is the sHSP domain. Lys70 is modified (N6-acetyllysine). Deamidated glutamine; partial is present on Gln90. Lys99 is subject to N6-acetyllysine. Zn(2+) is bound at residue His100. The residue at position 101 (Asn101) is a Deamidated asparagine; partial. Residues Glu102 and His107 each contribute to the Zn(2+) site. A Phosphoserine modification is found at Ser122. Asn123 carries the deamidated asparagine; partial modification. The segment at 145 to 173 (KVQSGLDAGHSERAIPVSREEKPSSAPSS) is disordered. A Deamidated glutamine; partial modification is found at Gln147. The segment covering 153 to 167 (GHSERAIPVSREEKP) has biased composition (basic and acidic residues). Residue His154 coordinates Zn(2+). An O-linked (GlcNAc) serine glycan is attached at Ser162.

Belongs to the small heat shock protein (HSP20) family. In terms of assembly, heteromer composed of three CRYAA and one CRYAB subunits. Inter-subunit bridging via zinc ions enhances stability, which is crucial as there is no protein turn over in the lens. Can also form homodimers and homotetramers (dimers of dimers) which serve as the building blocks of homooligomers. Within homooligomers, the zinc-binding motif is created from residues of 3 different molecules. His-100 and Glu-102 from one molecule are ligands of the zinc ion, and His-107 and His-154 residues from additional molecules complete the site with tetrahedral coordination geometry. Part of a complex required for lens intermediate filament formation composed of BFSP1, BFSP2 and CRYAA. In terms of processing, acetylation at Lys-70 may increase chaperone activity. Post-translationally, undergoes age-dependent proteolytical cleavage at the C-terminus.

It localises to the cytoplasm. It is found in the nucleus. Its function is as follows. Contributes to the transparency and refractive index of the lens. Acts as a chaperone, preventing aggregation of various proteins under a wide range of stress conditions. Required for the correct formation of lens intermediate filaments as part of a complex composed of BFSP1, BFSP2 and CRYAA. The sequence is that of Alpha-crystallin A chain (CRYAA) from Oryctolagus cuniculus (Rabbit).